Consider the following 362-residue polypeptide: 3-dehydroquinate synthase (362 aa).

NAD(+) contacts are provided by residues 71–76, 105–109, 129–130, Lys142, Lys151, and 169–172; these read DGEQYK, GVVGD, TT, and CLKT. Glu184, His247, and His264 together coordinate Zn(2+).

This sequence belongs to the sugar phosphate cyclases superfamily. Dehydroquinate synthase family. Co(2+) is required as a cofactor. Requires Zn(2+) as cofactor. The cofactor is NAD(+).

The protein localises to the cytoplasm. It catalyses the reaction 7-phospho-2-dehydro-3-deoxy-D-arabino-heptonate = 3-dehydroquinate + phosphate. It participates in metabolic intermediate biosynthesis; chorismate biosynthesis; chorismate from D-erythrose 4-phosphate and phosphoenolpyruvate: step 2/7. Functionally, catalyzes the conversion of 3-deoxy-D-arabino-heptulosonate 7-phosphate (DAHP) to dehydroquinate (DHQ). The chain is 3-dehydroquinate synthase from Shigella flexneri serotype 5b (strain 8401).